The primary structure comprises 1854 residues: Dystrophin, isoform D (1854 aa).

Disordered stretches follow at residues 1-65 (MTTT…PIYA), 84-161 (GSTT…YEMP), 240-352 (QSPT…MSPA), 516-548 (LKPT…PTPS), 595-650 (TPGG…TSES), 716-740 (VMSK…PSTA), 783-830 (LKLQ…STTP), and 1012-1036 (VSDT…EQSR). 2 stretches are compositionally biased toward low complexity: residues 11-37 (QRQQ…QQHQ) and 84-96 (GSTT…LQSS). Residues 143 to 157 (GLSSAQPATSASSGN) are compositionally biased toward polar residues. The span at 276–296 (QQQQQQQQAGINGQINGNGNQ) shows a compositional bias: low complexity. 2 stretches are compositionally biased toward polar residues: residues 331–345 (TLSR…SSAD) and 518–536 (PTST…SNTA). Over residues 595–606 (TPGGGVVGGQAA) the composition is skewed to gly residues. The span at 716-727 (VMSKSNSSLGSV) shows a compositional bias: polar residues. Composition is skewed to low complexity over residues 728–740 (TTPS…PSTA) and 783–814 (LKLQ…QQIQ). A compositionally biased stretch (polar residues) spans 815-830 (NGFASDDNSSSCSTTP). Spectrin repeat units follow at residues 936–1069 (EHWN…RLDE) and 1072–1176 (TKMR…VLCQ). Residues 1179–1209 (AQQTHENGDDGRTTSNSGTIGPLPNLGQSVK) are disordered. The WW domain maps to 1206–1239 (QSVKPPWERATTAANVPYYIDHERETTHWDHPEM). A ZZ-type zinc finger spans residues 1464–1520 (KHQAKCNICKEYPIVGFRYRCLKCFNFDMCQKCFFFGRNAKNHKLTHPMHEYCTTTT). Cys-1469, Cys-1472, Cys-1484, Cys-1487, Cys-1493, Cys-1496, His-1506, and His-1510 together coordinate Zn(2+). At Ser-1564 the chain carries Phosphoserine. Disordered stretches follow at residues 1673–1701 (EQSG…GEQG) and 1744–1854 (DEPN…ELQK). 2 stretches are compositionally biased toward polar residues: residues 1682–1694 (NGMQ…MTGL) and 1765–1796 (ALNS…QQNG). Over residues 1815 to 1826 (QELESINDDLED) the composition is skewed to acidic residues. Low complexity predominate over residues 1827–1845 (SSSSNTTNTTTTTTTTATT).

In terms of assembly, component of the dystrophin associated protein complex (DAPC). Interacts with Dg, via the Dg WW domain binding sites. As to expression, during embryogenesis and in third instar larvae, expression is seen in pericardial cells of the dorsal vessel and in the ventral nerve cord. Expression is absent from both the embryonic and larval musculature.

It is found in the cell membrane. It localises to the sarcolemma. Its subcellular location is the cytoplasm. The protein localises to the cytoskeleton. Functionally, required for the maintenance of appropriate synaptic retrograde communication and the stabilization of muscle cell architecture or physiology. May play a role in anchoring the cytoskeleton to the plasma membrane. The polypeptide is Dystrophin, isoform D (Dys) (Drosophila melanogaster (Fruit fly)).